Consider the following 293-residue polypeptide: PHO85 cyclin PHO80 (293 aa).

Phosphoserine; by PHO85 occurs at positions 234 and 267. A compositionally biased stretch (polar residues) spans 254–272; that stretch reads ESGSQTTQLKGSSSPNSHS. The disordered stretch occupies residues 254 to 293; it reads ESGSQTTQLKGSSSPNSHSSQKRYSEAKDAHIYNKRSKPD. The span at 276-293 shows a compositional bias: basic and acidic residues; sequence RYSEAKDAHIYNKRSKPD.

The protein belongs to the cyclin family. PHO80 subfamily. As to quaternary structure, forms a cyclin-CDK complex with PHO85. PHO80-PHO85 forms a stable complex with its inhibitor PHO81 under both high- and low-phosphate conditions, but PHO81 only inhibits the kinase upon phosphate starvation. Interacts with transcription factor PHO4. In terms of processing, phosphorylation of Ser-267 by PHO85 is required to form an active cyclin-kinase complex and for function.

Its subcellular location is the cytoplasm. The protein resides in the nucleus. Its activity is regulated as follows. Inhibited by the CDK inhibitor (CKI) PHO81 in response to phosphate starvation. Cyclin partner of the cyclin-dependent kinase (CDK) PHO85. Negatively regulates the expression of phosphate-starvation-responsive genes under phosphate-rich conditions. The PHO80-PHO85 cyclin-CDK holoenzyme phosphorylates and inactivates the transcription factor PHO4, by preventing its association with the transcription factor PHO2 and the nuclear import receptor PSE1, and by promoting association with the nuclear export receptor MSN5, excluding PHO4 from the nucleus. PHO80-PHO85 phosphorylates and inactivates protein kinase RIM15 by retaining it in the cytoplasm, antagonizing RIM15-induced entry into stationary phase. PHO80-PHO85 also phosphorylates and inactivates the calcineurin-responsive transcription factor CRZ1, linking PHO85 to calcium signaling. This chain is PHO85 cyclin PHO80 (PHO80), found in Saccharomyces cerevisiae (strain ATCC 204508 / S288c) (Baker's yeast).